Reading from the N-terminus, the 1032-residue chain is Unconventional myosin-Ih (1032 aa).

In terms of domain architecture, Myosin motor spans 12–701; the sequence is GVQDFVLLDA…TLFATEDAFE (690 aa). Residue 105–112 coordinates ATP; sequence GESGAGKT. The residue at position 365 (Ser-365) is a Phosphoserine. Residues 578-600 form an actin-binding region; it reads LSSLLETLISKEPSYIRCIKPND. IQ domains lie at 704 to 726 and 727 to 756; these read KHQL…EYVK and KRQA…AVRI. Residues 855–1029 form the TH1 domain; it reads KDGYTESLNQ…NGQLTVVSVR (175 aa).

Belongs to the TRAFAC class myosin-kinesin ATPase superfamily. Myosin family.

Its function is as follows. Myosins are actin-based motor molecules with ATPase activity. Unconventional myosins serve in intracellular movements. Their highly divergent tails are presumed to bind to membranous compartments, which would be moved relative to actin filaments. The sequence is that of Unconventional myosin-Ih (MYO1H) from Homo sapiens (Human).